The chain runs to 179 residues: Inner membrane-spanning protein YciB (179 aa).

The next 5 helical transmembrane spans lie at 22–42, 50–70, 76–96, 121–141, and 149–169; these read IYAATAALIVATAIVLIYSWV, MALITFVLVVVFGGLTLFFHN, WKVTVIYALFAGALLVSQWVM, LAWAVFFILCGLANIYIAFWL, and FKVFGLTALTLIFTLLSGIYI.

Belongs to the YciB family.

Its subcellular location is the cell inner membrane. In terms of biological role, plays a role in cell envelope biogenesis, maintenance of cell envelope integrity and membrane homeostasis. The protein is Inner membrane-spanning protein YciB of Shigella boydii serotype 18 (strain CDC 3083-94 / BS512).